A 107-amino-acid polypeptide reads, in one-letter code: Large ribosomal subunit protein uL24 (107 aa).

The protein belongs to the universal ribosomal protein uL24 family. As to quaternary structure, part of the 50S ribosomal subunit.

Its function is as follows. One of two assembly initiator proteins, it binds directly to the 5'-end of the 23S rRNA, where it nucleates assembly of the 50S subunit. In terms of biological role, one of the proteins that surrounds the polypeptide exit tunnel on the outside of the subunit. This Caldanaerobacter subterraneus subsp. tengcongensis (strain DSM 15242 / JCM 11007 / NBRC 100824 / MB4) (Thermoanaerobacter tengcongensis) protein is Large ribosomal subunit protein uL24.